Consider the following 194-residue polypeptide: Adenylate kinase (194 aa).

Residue 8–16 coordinates ATP; sequence GIPGVGKST.

It belongs to the archaeal adenylate kinase family. Homotrimer.

Its subcellular location is the cytoplasm. The enzyme catalyses AMP + ATP = 2 ADP. The protein is Adenylate kinase (adkA) of Sulfolobus acidocaldarius (strain ATCC 33909 / DSM 639 / JCM 8929 / NBRC 15157 / NCIMB 11770).